Consider the following 428-residue polypeptide: Dihydroorotase (428 aa).

The Zn(2+) site is built by His59 and His61. Substrate-binding positions include 61–63 (HLR) and Asn93. Residues Asp151, His178, and His231 each contribute to the Zn(2+) site. Asn277 is a substrate binding site. Asp304 lines the Zn(2+) pocket. Residue Asp304 is part of the active site. Residues His308 and 322 to 323 (FG) contribute to the substrate site.

It belongs to the metallo-dependent hydrolases superfamily. DHOase family. Class I DHOase subfamily. Zn(2+) serves as cofactor.

The enzyme catalyses (S)-dihydroorotate + H2O = N-carbamoyl-L-aspartate + H(+). It participates in pyrimidine metabolism; UMP biosynthesis via de novo pathway; (S)-dihydroorotate from bicarbonate: step 3/3. Its function is as follows. Catalyzes the reversible cyclization of carbamoyl aspartate to dihydroorotate. This is Dihydroorotase from Bacillus cereus (strain AH187).